The primary structure comprises 256 residues: MSDVARILKEARDQGRLTALDFAKEIFDDFIELHGDRNFRDDGAVIGGIGRLNGQAVTVVGIQKGKNLQDNLNRNFGQPHPEGYRKALRLMKQAEKFGRPVVTFINTAGAYPGVGAEERGQGEAIARNLMEMSDLKVPIIAIIIGEGGSGGALALAVADKVWMLENTIYSILSPEGFATILWKDGSRSEEAAELMKITSGELLNMGIVDKVIPERGYFTSEIIEAIKTAIVDELAELSQLSTEDLLEARYQRFRRY.

The region spanning 1–236 is the CoA carboxyltransferase C-terminal domain; the sequence is MSDVARILKE…KTAIVDELAE (236 aa).

This sequence belongs to the AccA family. In terms of assembly, acetyl-CoA carboxylase is a heterohexamer composed of biotin carboxyl carrier protein (AccB), biotin carboxylase (AccC) and two subunits each of ACCase subunit alpha (AccA) and ACCase subunit beta (AccD).

It localises to the cytoplasm. The catalysed reaction is N(6)-carboxybiotinyl-L-lysyl-[protein] + acetyl-CoA = N(6)-biotinyl-L-lysyl-[protein] + malonyl-CoA. The protein operates within lipid metabolism; malonyl-CoA biosynthesis; malonyl-CoA from acetyl-CoA: step 1/1. Functionally, component of the acetyl coenzyme A carboxylase (ACC) complex. First, biotin carboxylase catalyzes the carboxylation of biotin on its carrier protein (BCCP) and then the CO(2) group is transferred by the carboxyltransferase to acetyl-CoA to form malonyl-CoA. The protein is Acetyl-coenzyme A carboxylase carboxyl transferase subunit alpha of Streptococcus thermophilus (strain CNRZ 1066).